The following is a 350-amino-acid chain: Pleckstrin (350 aa).

A PH 1 domain is found at 4-101; the sequence is KRIREGYLVK…WVRDIKKAIK (98 aa). N6-acetyllysine is present on lysine 64. A phosphoserine mark is found at serine 113 and serine 117. The DEP domain maps to 136–221; the sequence is PEKGIKELNL…NPDAFYYFPD (86 aa). The PH 2 domain maps to 244–347; sequence IIIKQGCLLK…WIKAIQVASR (104 aa).

Functionally, major protein kinase C substrate of platelets. In Rattus norvegicus (Rat), this protein is Pleckstrin (Plek).